Reading from the N-terminus, the 427-residue chain is Gamma-glutamyl phosphate reductase (427 aa).

It belongs to the gamma-glutamyl phosphate reductase family.

Its subcellular location is the cytoplasm. It catalyses the reaction L-glutamate 5-semialdehyde + phosphate + NADP(+) = L-glutamyl 5-phosphate + NADPH + H(+). It functions in the pathway amino-acid biosynthesis; L-proline biosynthesis; L-glutamate 5-semialdehyde from L-glutamate: step 2/2. Catalyzes the NADPH-dependent reduction of L-glutamate 5-phosphate into L-glutamate 5-semialdehyde and phosphate. The product spontaneously undergoes cyclization to form 1-pyrroline-5-carboxylate. This is Gamma-glutamyl phosphate reductase from Rhizobium meliloti (strain 1021) (Ensifer meliloti).